Here is a 302-residue protein sequence, read N- to C-terminus: tRNA pseudouridine synthase B (302 aa).

Aspartate 47 serves as the catalytic Nucleophile.

This sequence belongs to the pseudouridine synthase TruB family. Type 1 subfamily.

It carries out the reaction uridine(55) in tRNA = pseudouridine(55) in tRNA. Responsible for synthesis of pseudouridine from uracil-55 in the psi GC loop of transfer RNAs. This Ruegeria sp. (strain TM1040) (Silicibacter sp.) protein is tRNA pseudouridine synthase B.